The chain runs to 118 residues: UPF0344 protein RBAM_010920 (118 aa).

A run of 4 helical transmembrane segments spans residues 4-24 (WHIT…GLYG), 33-53 (ITHM…AELF), 62-82 (EYAG…MLVI), and 93-113 (LWIG…HLPI).

This sequence belongs to the UPF0344 family.

The protein resides in the cell membrane. This is UPF0344 protein RBAM_010920 from Bacillus velezensis (strain DSM 23117 / BGSC 10A6 / LMG 26770 / FZB42) (Bacillus amyloliquefaciens subsp. plantarum).